A 719-amino-acid polypeptide reads, in one-letter code: ATP-dependent RNA helicase SUV3 homolog, mitochondrial (719 aa).

Residues 1 to 18 (MRRASGVLRVLGGLTQRC) constitute a mitochondrion transit peptide. The segment at 16–42 (QRCSTSSTPSSSRFPAMNSRRKRNSVR) is disordered. The 139-residue stretch at 181–319 (EARSVTRKIF…PAAIDIVKKL (139 aa)) folds into the Helicase ATP-binding domain. 194 to 201 (GPTNSGKT) contacts ATP. Positions 343–499 (KAIESYSNIE…PTYDQIETFS (157 aa)) constitute a Helicase C-terminal domain. Positions 662 to 692 (SKAAGSSKSSEGKRENPSKSEREKPNKRSSI) are disordered. Positions 671-687 (SEGKRENPSKSEREKPN) are enriched in basic and acidic residues. A coiled-coil region spans residues 693 to 717 (LEALLKRADISEDDLEQLREELNKN).

This sequence belongs to the helicase family. It depends on Mg(2+) as a cofactor. Mn(2+) is required as a cofactor.

It localises to the mitochondrion matrix. It is found in the nucleus. It catalyses the reaction ATP + H2O = ADP + phosphate + H(+). Its function is as follows. ATPase and DNA/RNA helicase able to unwind DNA/DNA, DNA/RNA and RNA/RNA duplexes in the 5'-3' direction. The chain is ATP-dependent RNA helicase SUV3 homolog, mitochondrial from Caenorhabditis elegans.